The following is a 498-amino-acid chain: Lysine--tRNA ligase (498 aa).

Glu407 and Glu414 together coordinate Mg(2+).

This sequence belongs to the class-II aminoacyl-tRNA synthetase family. Homodimer. Requires Mg(2+) as cofactor.

The protein localises to the cytoplasm. The catalysed reaction is tRNA(Lys) + L-lysine + ATP = L-lysyl-tRNA(Lys) + AMP + diphosphate. The sequence is that of Lysine--tRNA ligase from Sinorhizobium medicae (strain WSM419) (Ensifer medicae).